Here is a 130-residue protein sequence, read N- to C-terminus: Small ribosomal subunit protein uS11 (130 aa).

It belongs to the universal ribosomal protein uS11 family. As to quaternary structure, part of the 30S ribosomal subunit. Interacts with proteins S7 and S18. Binds to IF-3.

In terms of biological role, located on the platform of the 30S subunit, it bridges several disparate RNA helices of the 16S rRNA. Forms part of the Shine-Dalgarno cleft in the 70S ribosome. The sequence is that of Small ribosomal subunit protein uS11 from Ruegeria pomeroyi (strain ATCC 700808 / DSM 15171 / DSS-3) (Silicibacter pomeroyi).